Consider the following 89-residue polypeptide: Small ribosomal subunit protein uS17 (89 aa).

This sequence belongs to the universal ribosomal protein uS17 family. In terms of assembly, part of the 30S ribosomal subunit.

In terms of biological role, one of the primary rRNA binding proteins, it binds specifically to the 5'-end of 16S ribosomal RNA. The polypeptide is Small ribosomal subunit protein uS17 (Xanthomonas axonopodis pv. citri (strain 306)).